Here is a 368-residue protein sequence, read N- to C-terminus: Protein mab-21-like 3 (368 aa).

The protein belongs to the mab-21 family.

This is Protein mab-21-like 3 (mab21L3) from Xenopus laevis (African clawed frog).